Consider the following 255-residue polypeptide: tRNA pseudouridine synthase A (255 aa).

Asp52 functions as the Nucleophile in the catalytic mechanism. A substrate-binding site is contributed by Tyr111.

Belongs to the tRNA pseudouridine synthase TruA family. In terms of assembly, homodimer.

It catalyses the reaction uridine(38/39/40) in tRNA = pseudouridine(38/39/40) in tRNA. Its function is as follows. Formation of pseudouridine at positions 38, 39 and 40 in the anticodon stem and loop of transfer RNAs. This is tRNA pseudouridine synthase A from Cereibacter sphaeroides (strain KD131 / KCTC 12085) (Rhodobacter sphaeroides).